The primary structure comprises 650 residues: MICOS complex subunit MIC60, mitochondrial (650 aa).

The N-terminal 34 residues, 1–34 (MLRKSVLELSSRLSIKRFPRNLGAQRFHLSSSRN), are a transit peptide targeting the mitochondrion. The interval 26–74 (RFHLSSSRNASTSGKNGLPGAKPVGKPDASKVDPPKVTPPPPTKGNSSK) is disordered. The span at 28–40 (HLSSSRNASTSGK) shows a compositional bias: polar residues. Topologically, residues 35 to 74 (ASTSGKNGLPGAKPVGKPDASKVDPPKVTPPPPTKGNSSK) are mitochondrial matrix. The helical transmembrane segment at 75–95 (VVIGGVAIAGAFLVAYQTGYL) threads the bilayer. The Mitochondrial intermembrane portion of the chain corresponds to 96-549 (DQYLGKEQQK…FDTLKGTLRH (454 aa)). Disordered stretches follow at residues 121-168 (EAHH…ESDL), 239-267 (QSSS…EDGI), and 284-304 (EGSD…TKET). Over residues 284–299 (EGSDTESTGSSSIGEQ) the composition is skewed to low complexity. Coiled coils occupy residues 345 to 369 (AQVF…LRAR) and 396 to 430 (KAIQ…LAKA). Residues 550–570 (FSLIPPGGGGILAHSLAHVAS) form a helical membrane-spanning segment. The Mitochondrial matrix segment spans residues 571 to 650 (SLKFKEVDQA…QSYATCVSLT (80 aa)).

Belongs to the MICOS complex subunit Mic60 family. Component of the mitochondrial contact site and cristae organizing system (MICOS) complex. The MICOS complex associates with mitochondrial outer membrane proteins. Present in a large lipid-enriched complex called mitochondrial transmembrane lipoprotein (MTL) complex made of proteins located in the two mitochondrial membranes, including the TOM complex and the core components of the MICOS complex and containing at least digalactosyldiacylglycerol (DGDG). Binds to TOM40-1. Component of a mitochondrial large protein complex that contains, at least, MIC60, DGS1, TOM40, TOM20 proteins, and petC/RISP.

It localises to the mitochondrion inner membrane. In terms of biological role, component of the MICOS complex, a large protein complex of the mitochondrial inner membrane that plays crucial roles in the maintenance of crista junctions, inner membrane architecture, and formation of contact sites to the outer membrane. Plays a role in keeping cristae membranes connected to the inner boundary membrane. Also promotes protein import via the mitochondrial intermembrane space assembly (MIA) pathway. Involved in the maintenance of mitochondria morphology. Binds to glycerolipids such as cardiolipin (CL). Contributes to the export of phosphatidylethanolamine (PE) from mitochondria and to the import of galactoglycerolipids from plastids during phosphate (Pi) starvation. Promotes lipid desorption from membranes, likely as an initial step for lipid transfer, and regulates probably the tethering between the inner and outer membranes of mitochondria by binding to TOM40 proteins. The chain is MICOS complex subunit MIC60, mitochondrial from Arabidopsis thaliana (Mouse-ear cress).